Here is a 313-residue protein sequence, read N- to C-terminus: tRNA (guanine-N(7)-)-methyltransferase (313 aa).

S-adenosyl-L-methionine contacts are provided by Glu-33, Glu-58, and Asp-85. Substrate-binding positions include Lys-112, Asp-144, and Thr-177 to Glu-180.

Belongs to the class I-like SAM-binding methyltransferase superfamily. TrmB family.

The enzyme catalyses guanosine(46) in tRNA + S-adenosyl-L-methionine = N(7)-methylguanosine(46) in tRNA + S-adenosyl-L-homocysteine. It participates in tRNA modification; N(7)-methylguanine-tRNA biosynthesis. In terms of biological role, catalyzes the formation of N(7)-methylguanine at position 46 (m7G46) in tRNA. The polypeptide is tRNA (guanine-N(7)-)-methyltransferase (Thermotoga maritima (strain ATCC 43589 / DSM 3109 / JCM 10099 / NBRC 100826 / MSB8)).